Consider the following 1498-residue polypeptide: Mitogen-activated protein kinase kinase kinase nsy-1 (1498 aa).

2 disordered regions span residues 1-35 and 190-209; these read MSQNNKRQVQHNHEMSNDVCPLPLPPRGAPPPTAY and LQSYDKNNNDDDSKPPFART. Residues 22–33 are compositionally biased toward pro residues; it reads LPLPPRGAPPPT. The Protein kinase domain occupies 664-925; sequence SNERVVLGKG…AKDLLQDPFI (262 aa). Residues 670 to 678 and Lys693 each bind ATP; that span reads LGKGTYGTV. The active-site Proton acceptor is Asp790. The interval 1022-1050 is disordered; that stretch reads IDHARNRTFSSSSPVPDGQSSAGTNMSHP. The span at 1031–1042 shows a compositional bias: low complexity; sequence SSSSPVPDGQSS. Positions 1276–1314 form a coiled coil; the sequence is SREERVREDRKELRTLQEENEILIERLLQVERELNAQLK. A disordered region spans residues 1461-1498; the sequence is QPVFLSPMRSRDDSLDDYHSSSADDMYTGAAAETSSGN. Residues 1469 to 1479 show a composition bias toward basic and acidic residues; sequence RSRDDSLDDYH.

Belongs to the protein kinase superfamily. STE Ser/Thr protein kinase family. MAP kinase kinase kinase subfamily. As to quaternary structure, interacts with unc-43. Interacts with sek-1. The cofactor is Mg(2+). May be phosphorylated upon pathogenic bacterial infection. May be regulated by proteasomal degradation mediated by the E3-ubiquitin ligase rle-1. In terms of tissue distribution, expressed in intestine, hypodermis, rectal gland cell and neurons including sensory AWC neurons.

The protein resides in the cell projection. Its subcellular location is the axon. It localises to the perikaryon. It catalyses the reaction L-seryl-[protein] + ATP = O-phospho-L-seryl-[protein] + ADP + H(+). The enzyme catalyses L-threonyl-[protein] + ATP = O-phospho-L-threonyl-[protein] + ADP + H(+). In terms of biological role, serine/threonine-protein kinase which, by phosphorylating and activating sek-1, plays an important role in the activation of the p38 pathway also composed of the downstream effectors sek-1 and pmk-1. Downstream of CaMKII unc-43 and adapter protein tir-1, plays a role in determining asymmetric cell fates in olfactory AWC neurons during neuronal development. Activation results in the repression of odorant receptor str-2 expression in one of the 2 AWC neurons. Involved in resistance to pathogenic Gram-positive and Gram-negative bacterial and fungal infection. Involved in resistance to the nematotoxic C.cinerea galectin Cgl2. Probably by activating the sek1/pmk-1/skn-1 pathway, involved in the up-regulation of gcs-1 and glutathione-S-transferase gst-4 expression upon bacterial infection. Probably downstream of tir-1 and nipi-3, required for the expression of antimicrobial peptide nlp-29 in the epidermis in response to fungal infection or physical injury. Plays a role in resistance to several environmental stresses including oxidative, protein misfolding (ER) and osmotic stresses, and DNA-damaging reagents. Plays a role in the stabilization of transcription factor rnt-1 in the intestine during oxidative stress. Involved in germline apoptosis induced by heavy metals, such as Cu(2+). In addition, plays a role in the up-regulation of gcs-1 upon arsenite treatment, most likely through activation of pmk-1, to confer protection against toxicity induced by heavy metals. Plays a role downstream of tir-1 in regulating susceptibility to anoxia. Involved in egg laying. The polypeptide is Mitogen-activated protein kinase kinase kinase nsy-1 (Caenorhabditis elegans).